Reading from the N-terminus, the 424-residue chain is 3-ketoacyl-CoA thiolase B, peroxisomal (424 aa).

A peroxisome-targeting transit peptide spans 1–26 (MHRLQVVLGHLAGRSESSSALQAAPC). The segment at 1–26 (MHRLQVVLGHLAGRSESSSALQAAPC) is PTS2-type peroxisomal targeting signal. Residue cysteine 123 is the Acyl-thioester intermediate of the active site. N6-acetyllysine occurs at positions 173 and 234. Residues arginine 249, threonine 252, and serine 276 each contribute to the CoA site. The active-site Proton donor/acceptor is the cysteine 408.

This sequence belongs to the thiolase-like superfamily. Thiolase family. As to quaternary structure, homodimer. Interacts (via PTS2-type peroxisomal targeting signal region) with PEX7; leading to its translocation into peroxisomes.

The protein resides in the peroxisome. The catalysed reaction is an acyl-CoA + acetyl-CoA = a 3-oxoacyl-CoA + CoA. It carries out the reaction 2 acetyl-CoA = acetoacetyl-CoA + CoA. It catalyses the reaction hexanoyl-CoA + acetyl-CoA = 3-oxooctanoyl-CoA + CoA. The enzyme catalyses tetradecanoyl-CoA + acetyl-CoA = 3-oxohexadecanoyl-CoA + CoA. The catalysed reaction is 3-oxohexadecanedioyl-CoA + CoA = tetradecanedioyl-CoA + acetyl-CoA. It carries out the reaction 3-oxo-(6Z,9Z,12Z,15Z,18Z,21Z)-tetracosahexaenoyl-CoA + CoA = (4Z,7Z,10Z,13Z,16Z,19Z)-docosahexaenoyl-CoA + acetyl-CoA. The protein operates within lipid metabolism; peroxisomal fatty acid beta-oxidation. Functionally, responsible for the thiolytic cleavage of straight chain 3-keto fatty acyl-CoAs (3-oxoacyl-CoAs). Plays an important role in fatty acid peroxisomal beta-oxidation. Catalyzes the cleavage of short, medium, long, and very long straight chain 3-oxoacyl-CoAs. Medium chain straight 3-oxoacyl-CoAs are preferred substrates. The sequence is that of 3-ketoacyl-CoA thiolase B, peroxisomal from Rattus norvegicus (Rat).